The following is a 461-amino-acid chain: MLELRHRGSCPGPREAVSPPHREGEAAGGDHETESTSDKETDIDDRYGDLDSRTDSDIPEIPPSSDRTPEILKKALSGLSSRWKNWWIRGILTLTMISLFFLIIYMGSFMLMLLVLGIQVKCFHEIITIGYRVYHSYDLPWFRTLSWYFLLCVNYFFYGETVADYFATFVQREEQLQFLIRYHRFISFALYLAGFCMFVLSLVKKHYRLQFYMFAWTHVTLLITVTQSHLVIQNLFEGMIWFLVPISSVICNDITAYLFGFFFGRTPLIKLSPKKTWEGFIGGFFSTVVFGFIAAYVLSKYQYFVCPVEYRSDVNSFVTECEPSELFQLQTYSLPPFLKAVLRQERVSLYPFQIHSIALSTFASLIGPFGGFFASGFKRAFKIKDFANTIPGHGGIMDRFDCQYLMATFVHVYITSFIRGPNPSKVLQQLLVLQPEQQLNIYKTLKTHLIEKGILQPTLKV.

Residues Met-1–Arg-67 are disordered. Arg-7 bears the Omega-N-methylarginine mark. Over residues Pro-20–Ser-56 the composition is skewed to basic and acidic residues. Residues Ser-35 and Ser-37 each carry the phosphoserine modification. The next 6 membrane-spanning stretches (helical) occupy residues Met-96–Leu-116, Phe-149–Phe-169, His-183–Val-203, Leu-230–Ile-250, Gly-279–Ser-299, and Ile-357–Phe-377.

Belongs to the CDS family. As to quaternary structure, homodimer. Interacts with FOS; this interaction may enhance catalytic activity. Requires Mg(2+) as cofactor. In terms of tissue distribution, expressed in adult tissues such as placenta, brain, small intestine, ovary, testis and prostate. Highly expressed in fetal kidney, lung and brain. Lower level in fetal liver.

The protein resides in the endoplasmic reticulum membrane. The catalysed reaction is a 1,2-diacyl-sn-glycero-3-phosphate + CTP + H(+) = a CDP-1,2-diacyl-sn-glycerol + diphosphate. The enzyme catalyses 1-octadecanoyl-2-(5Z,8Z,11Z,14Z-eicosatetraenoyl)-sn-glycero-3-phosphate + CTP + H(+) = 1-octadecanoyl-2-(5Z,8Z,11Z,14Z-eicosatetraenoyl)-sn-glycero-3-cytidine-5'-diphosphate + diphosphate. It carries out the reaction 1-octadecanoyl-2-(9Z,12Z-octadecadienoyl)-sn-glycero-3-phosphate + CTP + H(+) = 1-octadecanoyl-2-(9Z,12Z-octadecadienoyl)-sn-glycero-3-cytidine-5'-diphosphate + diphosphate. It catalyses the reaction 1-hexadecanoyl-2-(5Z,8Z,11Z,14Z-eicosatetraenoyl)-sn-glycero-3-phosphate + CTP + H(+) = 1-hexadecanoyl-2-(5Z,8Z,11Z,14Z-eicosatetraenoyl)-sn-glycero-3-cytidine-5'-diphosphate + diphosphate. The catalysed reaction is 1,2-di-(5Z,8Z,11Z,14Z)-eicosatetraenoyl-sn-glycero-3-phosphate + CTP + H(+) = 1,2-di-(5Z,8Z,11Z,14Z-eicosatetraenoyl)-sn-glycero-3-cytidine-5'-diphosphate + diphosphate. The enzyme catalyses 1-octadecanoyl-2-(9Z-octadecenoyl)-sn-glycero-3-phosphate + CTP + H(+) = 1-octadecanoyl-2-(9Z-octadecenoyl)-sn-glycero-3-cytidine-5'-diphosphate + diphosphate. It carries out the reaction 1-octadecanoyl-2-(4Z,7Z,10Z,13Z,16Z,19Z-docosahexaenoyl)-sn-glycero-3-phosphate + CTP + H(+) = 1-octadecanoyl-2-(4Z,7Z,10Z,13Z,16Z,19Z-docosahexaenoyl)-sn-glycero-3-cytidine-5'-diphosphate + diphosphate. It catalyses the reaction 1,2-di-(9Z,12Z-octadecadienoyl)-sn-glycero-3-phosphate + CTP + H(+) = 1,2-di-(9Z,12Z-octadecadienoyl)-sn-glycero-3-cytidine-5'-diphosphate + diphosphate. The catalysed reaction is 1,2-di-(9Z-octadecenoyl)-sn-glycero-3-phosphate + CTP + H(+) = 1,2-di-(9Z-octadecenoyl)-sn-glycero-3-cytidine-5'-diphosphate + diphosphate. Its pathway is phospholipid metabolism; CDP-diacylglycerol biosynthesis; CDP-diacylglycerol from sn-glycerol 3-phosphate: step 3/3. With respect to regulation, inhibited by its anionic phospholipid end products, with phosphatidylinositol-(4,5)- bisphosphate showing the strongest inhibition. Its function is as follows. Catalyzes the conversion of phosphatidic acid (PA) to CDP-diacylglycerol (CDP-DAG), an essential intermediate in the synthesis of phosphatidylglycerol, cardiolipin and phosphatidylinositol. Exhibits almost no acyl chain preference for PA, showing no discrimination for the sn-1/sn-2 acyl chain composition of PAs. Plays an important role in regulating the growth of lipid droplets which are storage organelles at the center of lipid and energy homeostasis. Positively regulates the differentiation and development of adipocytes. This chain is Phosphatidate cytidylyltransferase 1, found in Homo sapiens (Human).